Here is a 355-residue protein sequence, read N- to C-terminus: Elongation factor Ts (355 aa).

The tract at residues 82-85 (TDFV) is involved in Mg(2+) ion dislocation from EF-Tu.

This sequence belongs to the EF-Ts family.

The protein resides in the cytoplasm. In terms of biological role, associates with the EF-Tu.GDP complex and induces the exchange of GDP to GTP. It remains bound to the aminoacyl-tRNA.EF-Tu.GTP complex up to the GTP hydrolysis stage on the ribosome. The protein is Elongation factor Ts (tsf) of Helicobacter pylori (strain ATCC 700392 / 26695) (Campylobacter pylori).